The primary structure comprises 316 residues: Ornithine carbamoyltransferase (316 aa).

Residues 57–60, Gln84, Arg108, and 135–138 each bind carbamoyl phosphate; these read STRT and HPCQ. Residues Asn166, Asp230, and 234 to 235 each bind L-ornithine; that span reads SM. Residues 269–270 and Arg297 contribute to the carbamoyl phosphate site; that span reads CL.

This sequence belongs to the aspartate/ornithine carbamoyltransferase superfamily. OTCase family.

The protein resides in the cytoplasm. It carries out the reaction carbamoyl phosphate + L-ornithine = L-citrulline + phosphate + H(+). It participates in amino-acid degradation; L-arginine degradation via ADI pathway; carbamoyl phosphate from L-arginine: step 2/2. Its function is as follows. Reversibly catalyzes the transfer of the carbamoyl group from carbamoyl phosphate (CP) to the N(epsilon) atom of ornithine (ORN) to produce L-citrulline. This is Ornithine carbamoyltransferase from Bacillus cereus (strain AH187).